The following is a 248-amino-acid chain: Phycocyanobilin:ferredoxin oxidoreductase (248 aa).

Belongs to the HY2 family.

The enzyme catalyses (2R,3Z)-phycocyanobilin + 4 oxidized [2Fe-2S]-[ferredoxin] = biliverdin IXalpha + 4 reduced [2Fe-2S]-[ferredoxin] + 4 H(+). Its function is as follows. Catalyzes the four-electron reduction of biliverdin IX-alpha (2-electron reduction at both the A and D rings); the reaction proceeds via an isolatable 2-electron intermediate, 181,182-dihydrobiliverdin. The sequence is that of Phycocyanobilin:ferredoxin oxidoreductase (pcyA) from Synechocystis sp. (strain ATCC 27184 / PCC 6803 / Kazusa).